Here is a 158-residue protein sequence, read N- to C-terminus: MSHFYDLAPKDKDGNPFPFSNLKGKVVLVVNTASKCGFTPQYKGLEALYQKYKDRGFIILGFPCNQFGNQEPGSDEEIAQFCQKNYGVTFPVLAKINVNGDNVDPVYQFLKSQKKQLGLERIKWNFEKFLVNRQGQVIERYSSISKPEHLENDIESVL.

The active-site Cysteine sulfenic acid (-SOH) intermediate is cysteine 36. The cysteines at positions 36 and 82 are disulfide-linked.

The protein belongs to the glutathione peroxidase family. In terms of assembly, monomer.

The protein localises to the cytoplasm. It is found in the mitochondrion. The enzyme catalyses a hydroperoxide + [thioredoxin]-dithiol = an alcohol + [thioredoxin]-disulfide + H2O. Glutathione peroxidase-like protein that protects cells during oxidative stress. Has peroxidase activity reducing hydrogen peroxide, alkyl and phospholipid hydroperoxides using preferentially thioredoxin as a reducing power. May act as a scavenger of H(2)O(2). The sequence is that of Glutathione peroxidase-like peroxiredoxin gpx1 from Schizosaccharomyces pombe (strain 972 / ATCC 24843) (Fission yeast).